Here is a 413-residue protein sequence, read N- to C-terminus: Serine hydroxymethyltransferase (413 aa).

(6S)-5,6,7,8-tetrahydrofolate-binding positions include L117 and 121–123 (GHL). Residue K226 is modified to N6-(pyridoxal phosphate)lysine. (6S)-5,6,7,8-tetrahydrofolate-binding positions include E239 and 349 to 351 (SPF).

The protein belongs to the SHMT family. In terms of assembly, homodimer. Pyridoxal 5'-phosphate serves as cofactor.

Its subcellular location is the cytoplasm. The enzyme catalyses (6R)-5,10-methylene-5,6,7,8-tetrahydrofolate + glycine + H2O = (6S)-5,6,7,8-tetrahydrofolate + L-serine. Its pathway is one-carbon metabolism; tetrahydrofolate interconversion. It functions in the pathway amino-acid biosynthesis; glycine biosynthesis; glycine from L-serine: step 1/1. Catalyzes the reversible interconversion of serine and glycine with tetrahydrofolate (THF) serving as the one-carbon carrier. This reaction serves as the major source of one-carbon groups required for the biosynthesis of purines, thymidylate, methionine, and other important biomolecules. Also exhibits THF-independent aldolase activity toward beta-hydroxyamino acids, producing glycine and aldehydes, via a retro-aldol mechanism. In Bacillus mycoides (strain KBAB4) (Bacillus weihenstephanensis), this protein is Serine hydroxymethyltransferase.